A 271-amino-acid polypeptide reads, in one-letter code: Formamidopyrimidine-DNA glycosylase (271 aa).

Proline 2 acts as the Schiff-base intermediate with DNA in catalysis. Catalysis depends on glutamate 3, which acts as the Proton donor. Catalysis depends on lysine 57, which acts as the Proton donor; for beta-elimination activity. The DNA site is built by histidine 90, arginine 109, and arginine 151. An FPG-type zinc finger spans residues 236 to 270; the sequence is MVYGRAGEACVTCKTKLQEIRQSNRSSVFCPSCQQ. The active-site Proton donor; for delta-elimination activity is arginine 260.

This sequence belongs to the FPG family. As to quaternary structure, monomer. It depends on Zn(2+) as a cofactor.

It catalyses the reaction Hydrolysis of DNA containing ring-opened 7-methylguanine residues, releasing 2,6-diamino-4-hydroxy-5-(N-methyl)formamidopyrimidine.. The enzyme catalyses 2'-deoxyribonucleotide-(2'-deoxyribose 5'-phosphate)-2'-deoxyribonucleotide-DNA = a 3'-end 2'-deoxyribonucleotide-(2,3-dehydro-2,3-deoxyribose 5'-phosphate)-DNA + a 5'-end 5'-phospho-2'-deoxyribonucleoside-DNA + H(+). Involved in base excision repair of DNA damaged by oxidation or by mutagenic agents. Acts as a DNA glycosylase that recognizes and removes damaged bases. Has a preference for oxidized purines, such as 7,8-dihydro-8-oxoguanine (8-oxoG). Has AP (apurinic/apyrimidinic) lyase activity and introduces nicks in the DNA strand. Cleaves the DNA backbone by beta-delta elimination to generate a single-strand break at the site of the removed base with both 3'- and 5'-phosphates. The sequence is that of Formamidopyrimidine-DNA glycosylase from Colwellia psychrerythraea (strain 34H / ATCC BAA-681) (Vibrio psychroerythus).